The following is a 61-amino-acid chain: Short neurotoxin 2 (61 aa).

4 disulfide bridges follow: C3–C23, C17–C40, C42–C53, and C54–C59.

Belongs to the three-finger toxin family. Short-chain subfamily. Type I alpha-neurotoxin sub-subfamily. As to expression, expressed by the venom gland.

It is found in the secreted. Binds to muscle nicotinic acetylcholine receptor (nAChR) and inhibit acetylcholine from binding to the receptor, thereby impairing neuromuscular transmission. The chain is Short neurotoxin 2 from Naja nivea (Cape cobra).